Consider the following 455-residue polypeptide: Bifunctional protein GlmU (455 aa).

The segment at 1 to 226 is pyrophosphorylase; the sequence is MSLEIVILAA…AMEVQGANDR (226 aa). UDP-N-acetyl-alpha-D-glucosamine is bound by residues 8–11, Lys22, Gln73, 78–79, 99–101, Gly136, Glu151, Asn166, and Asn224; these read LAAG, GT, and YGD. Asp101 contacts Mg(2+). Mg(2+) is bound at residue Asn224. A linker region spans residues 227–247; it reads KQLAELERHYQLRAGRRLMAQ. Residues 248–455 form an N-acetyltransferase region; the sequence is GVTLRDPARF…WKRPEKIKKD (208 aa). The UDP-N-acetyl-alpha-D-glucosamine site is built by Arg330 and Lys348. His360 acts as the Proton acceptor in catalysis. 2 residues coordinate UDP-N-acetyl-alpha-D-glucosamine: Tyr363 and Asn374. Residues Ala377, 383-384, Ser402, Ala420, and Arg437 contribute to the acetyl-CoA site; that span reads NY.

It in the N-terminal section; belongs to the N-acetylglucosamine-1-phosphate uridyltransferase family. The protein in the C-terminal section; belongs to the transferase hexapeptide repeat family. In terms of assembly, homotrimer. The cofactor is Mg(2+).

The protein localises to the cytoplasm. The enzyme catalyses alpha-D-glucosamine 1-phosphate + acetyl-CoA = N-acetyl-alpha-D-glucosamine 1-phosphate + CoA + H(+). It catalyses the reaction N-acetyl-alpha-D-glucosamine 1-phosphate + UTP + H(+) = UDP-N-acetyl-alpha-D-glucosamine + diphosphate. It functions in the pathway nucleotide-sugar biosynthesis; UDP-N-acetyl-alpha-D-glucosamine biosynthesis; N-acetyl-alpha-D-glucosamine 1-phosphate from alpha-D-glucosamine 6-phosphate (route II): step 2/2. It participates in nucleotide-sugar biosynthesis; UDP-N-acetyl-alpha-D-glucosamine biosynthesis; UDP-N-acetyl-alpha-D-glucosamine from N-acetyl-alpha-D-glucosamine 1-phosphate: step 1/1. Its pathway is bacterial outer membrane biogenesis; LPS lipid A biosynthesis. In terms of biological role, catalyzes the last two sequential reactions in the de novo biosynthetic pathway for UDP-N-acetylglucosamine (UDP-GlcNAc). The C-terminal domain catalyzes the transfer of acetyl group from acetyl coenzyme A to glucosamine-1-phosphate (GlcN-1-P) to produce N-acetylglucosamine-1-phosphate (GlcNAc-1-P), which is converted into UDP-GlcNAc by the transfer of uridine 5-monophosphate (from uridine 5-triphosphate), a reaction catalyzed by the N-terminal domain. The sequence is that of Bifunctional protein GlmU from Pseudomonas fluorescens (strain ATCC BAA-477 / NRRL B-23932 / Pf-5).